The following is a 325-amino-acid chain: Protease HtpX homolog (325 aa).

The helical transmembrane segment at 20–40 (IGYLLGGGGGMMIALVIAVAM) threads the bilayer. His-130 provides a ligand contact to Zn(2+). Residue Glu-131 is part of the active site. His-134 serves as a coordination point for Zn(2+). The next 2 helical transmembrane spans lie at 145 to 165 (IVATLAGAISMLGNFAFFLGG) and 173 to 193 (VMGVVGTLLAMIVAPFAAMIV). Glu-202 contributes to the Zn(2+) binding site. Positions 288 to 325 (AMTARAAAPSQNSGPWGQRSDNAGGNSNGGSRYRGPWS) are disordered. Positions 306 to 325 (RSDNAGGNSNGGSRYRGPWS) are enriched in low complexity.

The protein belongs to the peptidase M48B family. Zn(2+) serves as cofactor.

Its subcellular location is the cell inner membrane. This Brucella suis (strain ATCC 23445 / NCTC 10510) protein is Protease HtpX homolog.